A 266-amino-acid chain; its full sequence is Nus factor SuhB (266 aa).

Position 86 to 89 (86 to 89 (LDGI)) interacts with substrate.

It belongs to the inositol monophosphatase superfamily. Homodimer. The rRNA transcription and antitermination complex (rrnTAC) consists of RNA polymerase (RNAP), NusA, NusB, NusE (rpsJ), NusG, SubB, ribosomal protein S4, DNA and precursor rRNA; S4 is more flexible than other subunits. It depends on Mg(2+) as a cofactor.

The protein resides in the cytoplasm. The catalysed reaction is a myo-inositol phosphate + H2O = myo-inositol + phosphate. Part of the processive rRNA transcription and antitermination complex (rrnTAC). The complex forms an RNA-chaperone ring around the RNA exit tunnel of RNA polymerase (RNAP). It supports rapid transcription and antitermination of rRNA operons, cotranscriptional rRNA folding, and annealing of distal rRNA regions to allow correct ribosome biogenesis. This subunit may play a central role in organizing the structure. The polypeptide is Nus factor SuhB (suhB) (Buchnera aphidicola subsp. Baizongia pistaciae (strain Bp)).